The following is a 451-amino-acid chain: MGKHYIPNSAHKDEMLKEIGFSSIEDLFSDVPKGMVKEFNLPEGKSEYEVFTELNETLSKNKTVLEMPSFLGAGTYFHYVPAHVKYLIERSEFLTAYTPYQPEISQGMLQALFEYQSLIAELVGLPIVNSSMYDWGTAMAEAALMSARVTKRNKFVVPKHLSPEKKLVLKTYTAGPGLETVEVPWDERGQMDIEKLKEAVEGAAGVYIEMPNFFGLLEENIREIGEIAHDAGALFVVGVDPTILGIVEAPGELGADIVVGEAAYFGNPMNFGGPRAGIFAVRNDRKLIRQMPGRIIGMTKDADGKRAFVMTLQTREQHIRRAKATSNICSNEALVAVAAAIHLATLGPKGVRELGEVILKNTAYLKKRLAEVGEIVFDGVNFKDVPVRFEVPYSVIHERLLERNIHGGYYIGKHFQELGETALFAATETTRKEWVDGLVDALREIIGEAEL.

It belongs to the GcvP family. N-terminal subunit subfamily. In terms of assembly, the glycine cleavage system is composed of four proteins: P, T, L and H. In this organism, the P 'protein' is a heterodimer of two subunits.

It catalyses the reaction N(6)-[(R)-lipoyl]-L-lysyl-[glycine-cleavage complex H protein] + glycine + H(+) = N(6)-[(R)-S(8)-aminomethyldihydrolipoyl]-L-lysyl-[glycine-cleavage complex H protein] + CO2. The glycine cleavage system catalyzes the degradation of glycine. The P protein binds the alpha-amino group of glycine through its pyridoxal phosphate cofactor; CO(2) is released and the remaining methylamine moiety is then transferred to the lipoamide cofactor of the H protein. This Thermococcus kodakarensis (strain ATCC BAA-918 / JCM 12380 / KOD1) (Pyrococcus kodakaraensis (strain KOD1)) protein is Probable glycine dehydrogenase (decarboxylating) subunit 1.